The sequence spans 332 residues: GTP 3',8-cyclase (332 aa).

One can recognise a Radical SAM core domain in the interval 9-234 (TFGRRISYLR…DSDHRTGGPS (226 aa)). Residue Arg-18 participates in GTP binding. The [4Fe-4S] cluster site is built by Cys-25 and Cys-29. Tyr-31 serves as a coordination point for S-adenosyl-L-methionine. Cys-32 serves as a coordination point for [4Fe-4S] cluster. Arg-67 contacts GTP. Gly-71 is a binding site for S-adenosyl-L-methionine. Thr-100 provides a ligand contact to GTP. Ser-124 contributes to the S-adenosyl-L-methionine binding site. Lys-160 is a binding site for GTP. Met-194 provides a ligand contact to S-adenosyl-L-methionine. [4Fe-4S] cluster is bound by residues Cys-257 and Cys-260. 262-264 (RVR) contributes to the GTP binding site. Position 274 (Cys-274) interacts with [4Fe-4S] cluster.

It belongs to the radical SAM superfamily. MoaA family. As to quaternary structure, monomer and homodimer. The cofactor is [4Fe-4S] cluster.

The catalysed reaction is GTP + AH2 + S-adenosyl-L-methionine = (8S)-3',8-cyclo-7,8-dihydroguanosine 5'-triphosphate + 5'-deoxyadenosine + L-methionine + A + H(+). Its pathway is cofactor biosynthesis; molybdopterin biosynthesis. Functionally, catalyzes the cyclization of GTP to (8S)-3',8-cyclo-7,8-dihydroguanosine 5'-triphosphate. In Erythrobacter litoralis (strain HTCC2594), this protein is GTP 3',8-cyclase.